We begin with the raw amino-acid sequence, 790 residues long: DNA ligase 1 (790 aa).

A mitochondrion-targeting transit peptide spans 1–64 (MLAIRSSNYL…AFDALMSNAR (64 aa)). The interval 64-142 (RAAAKKKTPQ…TGAKKAKTLS (79 aa)) is disordered. The Nuclear localization signal 1 signature appears at 68–75 (KKKTPQTT). Polar residues predominate over residues 116–128 (DSANPRSDTSSIA). The segment at 337-346 (KLRLGFSGQT) is interaction with target DNA. Glu-442 lines the ATP pocket. The N6-AMP-lysine intermediate role is filled by Lys-444. ATP contacts are provided by Arg-449 and Arg-465. Glu-497 contributes to the Mg(2+) binding site. Residues 505–512 (KKKILPFQ) carry the Nuclear localization signal 2 motif. The tract at residues 518-520 (ARK) is interaction with target DNA. Position 596 (Glu-596) interacts with Mg(2+). Residues Lys-601, Arg-614, and Lys-620 each contribute to the ATP site. The interval 757-790 (DKKPEEATSSEQIADLYQAQKHNHPSNEVKGDDD) is disordered. The segment covering 781 to 790 (PSNEVKGDDD) has biased composition (basic and acidic residues).

This sequence belongs to the ATP-dependent DNA ligase family. It depends on Mg(2+) as a cofactor. In terms of tissue distribution, expressed in all vegetative and reproductive tissues.

It is found in the mitochondrion. It localises to the nucleus. It catalyses the reaction ATP + (deoxyribonucleotide)n-3'-hydroxyl + 5'-phospho-(deoxyribonucleotide)m = (deoxyribonucleotide)n+m + AMP + diphosphate.. Its function is as follows. Essential protein. DNA ligase that seals nicks in double-stranded DNA during DNA replication, DNA recombination and DNA repair. Involved in repair of both single strand breaks (SSBs) and double strand breaks (DSBs). Required in the endosperm for embryogenesis, probably to repair DNA-breaks generated by DME. This chain is DNA ligase 1 (LIG1), found in Arabidopsis thaliana (Mouse-ear cress).